The sequence spans 180 residues: Large ribosomal subunit protein uL5 (180 aa).

The protein belongs to the universal ribosomal protein uL5 family. Part of the 50S ribosomal subunit; part of the 5S rRNA/L5/L18/L25 subcomplex. Contacts the 5S rRNA and the P site tRNA. Forms a bridge to the 30S subunit in the 70S ribosome.

In terms of biological role, this is one of the proteins that bind and probably mediate the attachment of the 5S RNA into the large ribosomal subunit, where it forms part of the central protuberance. In the 70S ribosome it contacts protein S13 of the 30S subunit (bridge B1b), connecting the 2 subunits; this bridge is implicated in subunit movement. Contacts the P site tRNA; the 5S rRNA and some of its associated proteins might help stabilize positioning of ribosome-bound tRNAs. The protein is Large ribosomal subunit protein uL5 of Clostridium acetobutylicum (strain ATCC 824 / DSM 792 / JCM 1419 / IAM 19013 / LMG 5710 / NBRC 13948 / NRRL B-527 / VKM B-1787 / 2291 / W).